The primary structure comprises 166 residues: Small ribosomal subunit protein uS5 (166 aa).

An S5 DRBM domain is found at 12 to 75 (YIEKLVQVNR…EAARRNMIQV (64 aa)).

Belongs to the universal ribosomal protein uS5 family. As to quaternary structure, part of the 30S ribosomal subunit. Contacts proteins S4 and S8.

In terms of biological role, with S4 and S12 plays an important role in translational accuracy. Functionally, located at the back of the 30S subunit body where it stabilizes the conformation of the head with respect to the body. This is Small ribosomal subunit protein uS5 from Ectopseudomonas mendocina (strain ymp) (Pseudomonas mendocina).